The sequence spans 446 residues: Tubulin beta-1 chain (446 aa).

GTP contacts are provided by glutamine 11, glutamate 69, serine 138, glycine 142, threonine 143, glycine 144, asparagine 204, and asparagine 226. Residue glutamate 69 participates in Mg(2+) binding.

This sequence belongs to the tubulin family. As to quaternary structure, dimer of alpha and beta chains. A typical microtubule is a hollow water-filled tube with an outer diameter of 25 nm and an inner diameter of 15 nM. Alpha-beta heterodimers associate head-to-tail to form protofilaments running lengthwise along the microtubule wall with the beta-tubulin subunit facing the microtubule plus end conferring a structural polarity. Microtubules usually have 13 protofilaments but different protofilament numbers can be found in some organisms and specialized cells. Mg(2+) is required as a cofactor.

The protein resides in the cytoplasm. It is found in the cytoskeleton. In terms of biological role, tubulin is the major constituent of microtubules, a cylinder consisting of laterally associated linear protofilaments composed of alpha- and beta-tubulin heterodimers. Microtubules grow by the addition of GTP-tubulin dimers to the microtubule end, where a stabilizing cap forms. Below the cap, tubulin dimers are in GDP-bound state, owing to GTPase activity of alpha-tubulin. This is Tubulin beta-1 chain (TUBB1) from Suillus bovinus (Jersey cow bolete).